The chain runs to 189 residues: CDP-archaeol synthase (189 aa).

A run of 5 helical transmembrane segments spans residues 6–26, 71–91, 96–116, 125–145, and 162–184; these read VAIA…AVLA, GVVL…TVGV, IAAA…ASFL, GAAF…ALTA, and VAIF…AFGL.

This sequence belongs to the CDP-archaeol synthase family. Mg(2+) is required as a cofactor.

It is found in the cell membrane. The catalysed reaction is 2,3-bis-O-(geranylgeranyl)-sn-glycerol 1-phosphate + CTP + H(+) = CDP-2,3-bis-O-(geranylgeranyl)-sn-glycerol + diphosphate. It participates in membrane lipid metabolism; glycerophospholipid metabolism. In terms of biological role, catalyzes the formation of CDP-2,3-bis-(O-geranylgeranyl)-sn-glycerol (CDP-archaeol) from 2,3-bis-(O-geranylgeranyl)-sn-glycerol 1-phosphate (DGGGP) and CTP. This reaction is the third ether-bond-formation step in the biosynthesis of archaeal membrane lipids. The protein is CDP-archaeol synthase of Natronomonas pharaonis (strain ATCC 35678 / DSM 2160 / CIP 103997 / JCM 8858 / NBRC 14720 / NCIMB 2260 / Gabara) (Halobacterium pharaonis).